The following is a 1140-amino-acid chain: Kinesin-like protein KIN-14O (1140 aa).

Positions 1–12 are enriched in basic and acidic residues; that stretch reads MLESEFQREHAF. 4 disordered regions span residues 1 to 37, 50 to 81, 161 to 217, and 323 to 347; these read MLES…ADDD, NPAE…DEDS, SPGS…GGHK, and ASGT…KEED. The segment covering 161–179 has biased composition (low complexity); sequence SPGSSHGGSTPRSPFSPSS. The segment covering 180–193 has biased composition (basic and acidic residues); sequence PRERHNKGLADSRF. Residues 197-209 show a composition bias toward polar residues; that stretch reads LPNSSALDPSSPG. Residues 327–546 adopt a coiled-coil conformation; it reads SEENETEKSK…KAKEMEEKSE (220 aa). The segment covering 332–347 has biased composition (basic and acidic residues); the sequence is TEKSKLEEKKKDKEED. The Kinesin motor domain occupies 632–952; sequence NIRVYCRVRP…LKFAERVSGV (321 aa). Position 716-723 (716-723) interacts with ATP; it reads GQTGSGKT. Residues 1002–1018 are compositionally biased toward polar residues; sequence LGQSDDFNSEAGDSQLS. 2 disordered regions span residues 1002–1021 and 1028–1140; these read LGQS…SIED and DYTR…KRWS. Basic and acidic residues predominate over residues 1066–1078; the sequence is EGRKPLKISDKPK. Over residues 1099-1130 the composition is skewed to polar residues; the sequence is TMRTTNIAKATSALLSPSSQGMKKTGSASNFL.

Belongs to the TRAFAC class myosin-kinesin ATPase superfamily. Kinesin family. KIN-14 subfamily.

The polypeptide is Kinesin-like protein KIN-14O (Arabidopsis thaliana (Mouse-ear cress)).